A 402-amino-acid chain; its full sequence is KSEQSSFSSSSSVRNELSVYHNSRQKPPAEKTNQSSKNIGKKAAPFKKQKRANKGSSGAQVLYAKDSGGAQNESLRSNEADLAKKKNPNPSGDTGSSKNQDSMAAQNVHQKSQMSVETCTTPSKSNLILESLGLQFFGREVTLFRLKNYLTSERHSDVDDNVVQENLNDSRGEIPDSTPESKMHHKLVLPSYTPNVRRTMRTRSKPLEYWRGERIDYQARPSGGFVIGGILSPDTVSSKRKAKGNLGRIITTANRKRICLENAPIKNKFMVNLNIPLGDPLQPTRVKDPETQETVLMDLIRPRDTYQFCVEHDELKVYKTLDTPFFSSGKLIIGPLQEKGKQHVGLDTLVFYVNLGYLLCTLHETPYIVTTGDSFYVPSGNYYNIKNLLNEERVLLFTQIKS.

A Glycyl lysine isopeptide (Lys-Gly) (interchain with G-Cter in SUMO2) cross-link involves residue lysine 1. Low complexity predominate over residues 1-12 (KSEQSSFSSSSS). The tract at residues 1 to 118 (KSEQSSFSSS…HQKSQMSVET (118 aa)) is disordered. Residue serine 5 is modified to Phosphoserine. The Nuclear localization signal signature appears at 25-42 (QKPPAEKTNQSSKNIGKK). Residues 44–53 (APFKKQKRAN) show a composition bias toward basic residues. Over residues 88 to 118 (PNPSGDTGSSKNQDSMAAQNVHQKSQMSVET) the composition is skewed to polar residues. Lysine 186 participates in a covalent cross-link: Glycyl lysine isopeptide (Lys-Gly) (interchain with G-Cter in SUMO2). The residue at position 193 (threonine 193) is a Phosphothreonine. Positions 196 to 218 (VRRTMRTRSKPLEYWRGERIDYQ) are MIF2 homology domain II. Phosphoserine is present on residues serine 222 and serine 232. Residues 239–257 (KRKAKGNLGRIITTANRKR) carry the Nuclear localization signal motif. Residue lysine 266 forms a Glycyl lysine isopeptide (Lys-Gly) (interchain with G-Cter in SUMO2) linkage. The segment at 349-402 (LVFYVNLGYLLCTLHETPYIVTTGDSFYVPSGNYYNIKNLLNEERVLLFTQIKS) is MIF2 homology domain III.

Belongs to the CENP-C/MIF2 family. In terms of assembly, oligomer. Component of the CENPA-NAC complex, at least composed of CENPA, CENPC, CENPH, CENPM, CENPN, CENPT and CENPU. The CENPA-NAC complex interacts with the CENPA-CAD complex, composed of CENPI, CENPK, CENPL, CENPO, CENPP, CENPQ, CENPR and CENPS. Binds to DAXX. Interacts with DNMT3B. Interacts directly with CENPA. Identified in a centromere complex containing histones H2A, H2B and H4, and at least CENPA, CENPB, CENPC, CENPT, CENPN, HJURP, SUPT16H, SSRP1 and RSF1. Interacts with MEIKIN.

It localises to the nucleus. Its subcellular location is the chromosome. It is found in the centromere. The protein localises to the kinetochore. Functionally, component of the CENPA-NAC (nucleosome-associated) complex, a complex that plays a central role in assembly of kinetochore proteins, mitotic progression and chromosome segregation. The CENPA-NAC complex recruits the CENPA-CAD (nucleosome distal) complex and may be involved in incorporation of newly synthesized CENPA into centromeres. CENPC recruits DNA methylation and DNMT3B to both centromeric and pericentromeric satellite repeats and regulates the histone code in these regions. This is Centromere protein C (CENPC) from Ovis aries (Sheep).